The primary structure comprises 478 residues: MAVIDQHQDDFSNVSWNTDEHTAAESSSSVTATEFDDTERNGHNAYESDAPGSDGQEVLDCVVSEPLKENDGSKDTFVSYLITTNTTFPSFQRSQTTVRRRFTDFVFLYKALSRDYPTAAVPPLPDKQRMEYVSGNRFGPDFTNRRAHSLQRFLNRLSLHPVLRRADILHIFLESPDWNATMRSRSVRGSTSSDTGSSGVFDNLTDSFLNAFTKAHKHDKRFLEVRERSDKLDEDLAHIEKVVARVARRENDIELDFKDLAEQFQKLITLEPGVENEVRHFANSIEDTAMGLRKLKDVTDGDYLGSLRDMQAYSTALKSLLKAREQKQVDYEQLTEYLNKNTVDRDQLQSGQGSSGLSGASGRLMRKLEDVRGVDHEQARRDRQRKLEMNIDKLTTEAERAKKTSEMFDDEVVKEVADFERIKRVEFKKQLGGLADSQIEFYDEVTEIWEGYVKAMEKEGVSGTRSTGVEPPGRRLAD.

Basic and acidic residues predominate over residues 1–10 (MAVIDQHQDD). A disordered region spans residues 1–56 (MAVIDQHQDDFSNVSWNTDEHTAAESSSSVTATEFDDTERNGHNAYESDAPGSDGQ). Residues 24 to 33 (AESSSSVTAT) are compositionally biased toward low complexity. The PX domain occupies 58–180 (VLDCVVSEPL…IFLESPDWNA (123 aa)). 4 residues coordinate a 1,2-diacyl-sn-glycero-3-phospho-(1D-myo-inositol-3-phosphate): arginine 101, threonine 103, lysine 127, and arginine 146. A disordered region spans residues 459 to 478 (EGVSGTRSTGVEPPGRRLAD).

The protein belongs to the sorting nexin family. Interacts with the mitochondrial prohibitin complex subunits PHB1 and PHB2; the interaction is direct and plays a role in mitophagy.

Its subcellular location is the cytoplasm. It is found in the cytosol. The protein localises to the preautophagosomal structure membrane. The protein resides in the endosome membrane. It localises to the mitochondrion membrane. Its subcellular location is the lipid droplet. Its function is as follows. Sorting nexin, involved in the separation or division of vacuoles throughout the entire life cycle of the cells. Involved in retrieval of late-Golgi SNAREs from post-Golgi endosomes to the trans-Golgi network, for cytoplasm to vacuole transport (Cvt), and autophagy of large cargos including mitophagy, pexophagy and glycophagy. Required for the switch to necrotrophic growth. The sequence is that of Sorting nexin-4 from Colletotrichum higginsianum (strain IMI 349063) (Crucifer anthracnose fungus).